A 336-amino-acid chain; its full sequence is 7,8-didemethyl-8-hydroxy-5-deazariboflavin synthase (336 aa).

Residues Ile-18–Asn-249 form the Radical SAM core domain. Residues Cys-32, Cys-36, and Cys-39 each contribute to the [4Fe-4S] cluster site.

It belongs to the radical SAM superfamily. CofG family. In terms of assembly, consists of two subunits, CofG and CofH. [4Fe-4S] cluster is required as a cofactor.

It catalyses the reaction 5-amino-5-(4-hydroxybenzyl)-6-(D-ribitylimino)-5,6-dihydrouracil + S-adenosyl-L-methionine = 7,8-didemethyl-8-hydroxy-5-deazariboflavin + 5'-deoxyadenosine + L-methionine + NH4(+) + H(+). Its pathway is cofactor biosynthesis; coenzyme F0 biosynthesis. Catalyzes the radical-mediated synthesis of 7,8-didemethyl-8-hydroxy-5-deazariboflavin from 5-amino-5-(4-hydroxybenzyl)-6-(D-ribitylimino)-5,6-dihydrouracil. This is 7,8-didemethyl-8-hydroxy-5-deazariboflavin synthase from Synechococcus elongatus (strain ATCC 33912 / PCC 7942 / FACHB-805) (Anacystis nidulans R2).